A 21-amino-acid polypeptide reads, in one-letter code: 23S rRNA methylase leader peptide (21 aa).

Its function is as follows. Involved in erythromycin resistance. In Corynebacterium diphtheriae, this protein is 23S rRNA methylase leader peptide.